A 621-amino-acid polypeptide reads, in one-letter code: Chaperone protein dnaK (621 aa).

The segment at 597–621 (VYSSTQQDNSKTEDGSVIDTNSKEA) is disordered.

This sequence belongs to the heat shock protein 70 family.

The protein localises to the plastid. Its subcellular location is the chloroplast. Functionally, acts as a chaperone. This Gracilaria tenuistipitata var. liui (Red alga) protein is Chaperone protein dnaK.